Consider the following 72-residue polypeptide: Protein RALF-like 12 (72 aa).

Residues methionine 1–alanine 17 form the signal peptide. Intrachain disulfides connect cysteine 34/cysteine 43 and cysteine 63/cysteine 69. A disordered region spans residues proline 37 to serine 60.

It belongs to the plant rapid alkalinization factor (RALF) family.

The protein localises to the secreted. Functionally, cell signaling peptide that may regulate plant stress, growth, and development. Mediates a rapid alkalinization of extracellular space by mediating a transient increase in the cytoplasmic Ca(2+) concentration leading to a calcium-dependent signaling events through a cell surface receptor and a concomitant activation of some intracellular mitogen-activated protein kinases. This Arabidopsis thaliana (Mouse-ear cress) protein is Protein RALF-like 12 (RALFL12).